We begin with the raw amino-acid sequence, 689 residues long: Protein SDA1 homolog (689 aa).

Disordered stretches follow at residues 227–260, 485–512, and 623–689; these read DEKKDSDSESEDEGPTARDLMVRYSTGKKNTKNK, EQEKKEEPEEDDGWESASLSDDDEDGEW, and TDRK…RLMK. Residues 258 to 319 are a coiled coil; sequence KNKKKLDKAM…RFEVKLMHMD (62 aa). Residues 492-512 show a composition bias toward acidic residues; the sequence is PEEDDGWESASLSDDDEDGEW. Residues 670-681 are compositionally biased toward basic and acidic residues; it reads RDKQIALRDSLL.

Belongs to the SDA1 family.

The protein resides in the nucleus. Its subcellular location is the nucleolus. Functionally, required for 60S pre-ribosomal subunits export to the cytoplasm. The chain is Protein SDA1 homolog (sdad1) from Xenopus laevis (African clawed frog).